The sequence spans 87 residues: Apolipoprotein C-I (87 aa).

A signal peptide spans 1–26; that stretch reads MRLILSLPVLAVVLAMVLEGPAPAQA.

Belongs to the apolipoprotein C1 family.

The protein resides in the secreted. Its function is as follows. Inhibitor of lipoprotein binding to the low density lipoprotein (LDL) receptor, LDL receptor-related protein, and very low density lipoprotein (VLDL) receptor. Associates with high density lipoproteins (HDL) and the triacylglycerol-rich lipoproteins in the plasma and makes up about 10% of the protein of the VLDL and 2% of that of HDL. Appears to interfere directly with fatty acid uptake and is also the major plasma inhibitor of cholesteryl ester transfer protein (CETP). Binds free fatty acids and reduces their intracellular esterification. Modulates the interaction of APOE with beta-migrating VLDL and inhibits binding of beta-VLDL to the LDL receptor-related protein. This chain is Apolipoprotein C-I (APOC1), found in Pteropus vampyrus (Large flying fox).